The sequence spans 599 residues: Elongation factor 4 (599 aa).

Residues 4–186 (KFIRNFSIIA…AIIKHVPPPL (183 aa)) form the tr-type G domain. GTP-binding positions include 16-21 (DHGKST) and 133-136 (NKID).

This sequence belongs to the TRAFAC class translation factor GTPase superfamily. Classic translation factor GTPase family. LepA subfamily.

Its subcellular location is the cell membrane. The catalysed reaction is GTP + H2O = GDP + phosphate + H(+). Its function is as follows. Required for accurate and efficient protein synthesis under certain stress conditions. May act as a fidelity factor of the translation reaction, by catalyzing a one-codon backward translocation of tRNAs on improperly translocated ribosomes. Back-translocation proceeds from a post-translocation (POST) complex to a pre-translocation (PRE) complex, thus giving elongation factor G a second chance to translocate the tRNAs correctly. Binds to ribosomes in a GTP-dependent manner. The sequence is that of Elongation factor 4 from Ureaplasma parvum serovar 3 (strain ATCC 27815 / 27 / NCTC 11736).